Reading from the N-terminus, the 420-residue chain is Type II methyltransferase M.NmeDI (420 aa).

The interval 1-23 (MMSLKIQPAVPKKSDKPSATNRD) is disordered. One can recognise an SAM-dependent MTase C5-type domain in the interval 56–411 (TLIFSFFSGA…MTLKSYLENH (356 aa)). C148 is a catalytic residue.

Belongs to the class I-like SAM-binding methyltransferase superfamily. C5-methyltransferase family.

The enzyme catalyses a 2'-deoxycytidine in DNA + S-adenosyl-L-methionine = a 5-methyl-2'-deoxycytidine in DNA + S-adenosyl-L-homocysteine + H(+). Its function is as follows. A methylase that recognizes the double-stranded sequence 5'-RCCGGB-3', methylates C-2 on both strands, and protects the DNA from cleavage by the NmeDI endonuclease. This Neisseria meningitidis serogroup C protein is Type II methyltransferase M.NmeDI (nmeDIMP).